We begin with the raw amino-acid sequence, 476 residues long: ATP synthase subunit beta (476 aa).

154–161 (GGAGVGKT) provides a ligand contact to ATP.

It belongs to the ATPase alpha/beta chains family. In terms of assembly, F-type ATPases have 2 components, CF(1) - the catalytic core - and CF(0) - the membrane proton channel. CF(1) has five subunits: alpha(3), beta(3), gamma(1), delta(1), epsilon(1). CF(0) has four main subunits: a(1), b(1), b'(1) and c(9-12).

Its subcellular location is the cell inner membrane. It catalyses the reaction ATP + H2O + 4 H(+)(in) = ADP + phosphate + 5 H(+)(out). Functionally, produces ATP from ADP in the presence of a proton gradient across the membrane. The catalytic sites are hosted primarily by the beta subunits. This is ATP synthase subunit beta from Rhodopseudomonas palustris (strain BisB5).